Consider the following 201-residue polypeptide: uncharacterized protein (201 aa).

This is an uncharacterized protein from Acanthamoeba polyphaga mimivirus (APMV).